A 914-amino-acid chain; its full sequence is Chitin synthase B (914 aa).

Disordered stretches follow at residues 1–67 (MAYQ…TSGY) and 112–140 (YARS…GGGL). The segment covering 130-140 (GGAGSGGGGGL) has biased composition (gly residues). Helical transmembrane passes span 543-562 (WLNG…GRMY), 586-606 (ILTW…MDLV), 627-647 (IVNT…FILA), 662-682 (SFVV…YLVV), 712-732 (AGII…ASFM), 843-863 (LVTF…SDGV), and 882-902 (ALLW…CWFL).

Belongs to the chitin synthase family. Class III subfamily.

The protein localises to the cell membrane. It catalyses the reaction [(1-&gt;4)-N-acetyl-beta-D-glucosaminyl](n) + UDP-N-acetyl-alpha-D-glucosamine = [(1-&gt;4)-N-acetyl-beta-D-glucosaminyl](n+1) + UDP + H(+). Its function is as follows. Polymerizes chitin, a structural polymer of the cell wall and septum, by transferring the sugar moiety of UDP-GlcNAc to the non-reducing end of the growing chitin polymer. Plays an important role in septal growth or maintenance. Mediates colony spore formation. The sequence is that of Chitin synthase B from Aspergillus niger (strain ATCC MYA-4892 / CBS 513.88 / FGSC A1513).